Consider the following 392-residue polypeptide: Copper-containing nitrite reductase (392 aa).

The signal sequence occupies residues 1–18 (MKRQALAAMIASLFALAA). A lipid anchor (N-palmitoyl cysteine) is attached at Cys-19. Residue Cys-19 is the site of S-diacylglycerol cysteine attachment. The segment at 30–49 (ETPAASAEAASSAAQATAET) is disordered. Plastocyanin-like domains are found at residues 101 to 195 (WTFD…ILVE) and 245 to 346 (GHVG…LKVE). The Cu cation site is built by His-134, His-139, His-174, Cys-175, His-183, and Met-188. His-139 is a binding site for substrate. A substrate-binding site is contributed by His-280. A Cu cation-binding site is contributed by His-329. The segment at 367–392 (GAASAPAASAPAASAPAASASEKSVY) is disordered. 4 consecutive repeat copies span residues 368 to 372 (AASAP), 373 to 377 (AASAP), 378 to 382 (AASAP), and 383 to 387 (AASAS). A 4 X 5 AA tandem repeats of A-A-S-A-P region spans residues 368-387 (AASAPAASAPAASAPAASAS).

This sequence belongs to the multicopper oxidase family. Homotrimer. Cu(+) is required as a cofactor. The cofactor is Cu(2+). Palmitoylated.

The protein localises to the cell outer membrane. The catalysed reaction is nitric oxide + Fe(III)-[cytochrome c] + H2O = Fe(II)-[cytochrome c] + nitrite + 2 H(+). Its function is as follows. Catalyzes the reduction of nitrite to nitric oxide (NO), probably with azurin as electron donor. Essential for growth and survival in oxygen-depleted environments. Can also provide protection against killing by normal human sera. The chain is Copper-containing nitrite reductase (aniA) from Neisseria gonorrhoeae.